The sequence spans 304 residues: MGPTASGKTSLAIDLKKRKEKIDIISVDSALIYRDMDIGTAKPVAEELKLAPHKLINIRDPVECYSAADFYRDADNEMENIIQSEHTPFLVGGTMLYFKTLLDGLFFLPATNQKIRDDLEYEAKRTGWINIHDLLKHIDPISANKIHLNDHKRIIRALEIFFISGKTWTELKLINNQKLKYRFHQFAVVPSSRDLLYKRIEERFHRMLDIGFEDEVIKLFNRSDLHTKEVKSSISCVGYRQMWEYLSGDINYNQMIIKGICATRQLAKRQLTWLRRWPNLCWLNSDNLSAATDSISKILIEKSI.

2 to 9 provides a ligand contact to ATP; the sequence is GPTASGKT. 4–9 serves as a coordination point for substrate; that stretch reads TASGKT. An interaction with substrate tRNA region spans residues 28–31; that stretch reads DSAL.

This sequence belongs to the IPP transferase family. As to quaternary structure, monomer. The cofactor is Mg(2+).

It catalyses the reaction adenosine(37) in tRNA + dimethylallyl diphosphate = N(6)-dimethylallyladenosine(37) in tRNA + diphosphate. Its function is as follows. Catalyzes the transfer of a dimethylallyl group onto the adenine at position 37 in tRNAs that read codons beginning with uridine, leading to the formation of N6-(dimethylallyl)adenosine (i(6)A). The polypeptide is tRNA dimethylallyltransferase (Blochmanniella pennsylvanica (strain BPEN)).